The primary structure comprises 702 residues: Protein crooked neck (702 aa).

HAT repeat units follow at residues 56-88 (DYQQ…WEEQ), 90-122 (QEIQ…MEMK), 124-156 (KQVN…MEEM), 158-189 (ENVA…FELR), 191-222 (KEID…FEES), 224-259 (GFIH…FEEG), 261-295 (KEHD…HEKK), 305-337 (VIVS…LIEA), 339-373 (GDRD…LWIN), 383-419 (EDAE…FEIR), 454-486 (REFE…LENL), 488-522 (GDTD…FEVA), and 524-555 (GETE…FEMG). The Nuclear localization signal signature appears at 620–628 (PRRIKKRQK). The segment at 670-702 (KDNTVDDPPATAIASEPEPAADAAPADTTDSGD) is disordered. The segment covering 683–702 (ASEPEPAADAAPADTTDSGD) has biased composition (low complexity).

Belongs to the crooked-neck family. Colocalizes with a complex containing snRNP proteins. In terms of tissue distribution, transcribed in all cells during embryonic development.

Its subcellular location is the nucleus speckle. In terms of biological role, may be involved in pre-mRNA splicing process. Involved in embryonic neurogenesis and cell rearrangement during Malpighian tubule morphogenesis. The protein is Protein crooked neck (crn) of Drosophila melanogaster (Fruit fly).